Here is a 67-residue protein sequence, read N- to C-terminus: Beta-defensin 123 (67 aa).

An N-terminal signal peptide occupies residues 1–20 (MKLLLLTLTVLLLLSQLTPG). 3 disulfide bridges follow: cysteine 25–cysteine 52, cysteine 32–cysteine 46, and cysteine 36–cysteine 53.

The protein belongs to the beta-defensin family. Abundant expression in the male reproductive tract only. Expressed abundantly in testis, while expression in epididymis decreased gradually from caput to cauda.

The protein localises to the secreted. Has antibacterial activity. This chain is Beta-defensin 123 (DEFB123), found in Macaca mulatta (Rhesus macaque).